Here is a 912-residue protein sequence, read N- to C-terminus: WD repeat-containing protein 44 (912 aa).

3 disordered regions span residues 206 to 352 (DIIE…ELTD), 399 to 426 (SNDA…LKQK), and 460 to 481 (RDEV…GMPY). The segment covering 236 to 258 (NRPPQPINAPPPRPPPPARPAPP) has biased composition (pro residues). The segment covering 264-278 (GDTDFDRSSGFEYQK) has biased composition (basic and acidic residues). Residues 288-311 (SPNTLTENMNRDSQPSLDLASATS) are compositionally biased toward polar residues. Residues 410–422 (KPQSHQSETDGGK) show a composition bias toward basic and acidic residues. Residues 469–478 (DDPSSSDDEG) are compositionally biased toward acidic residues. The WD 1 repeat unit spans residues 511–550 (EHVGAVWTMKFSHCGRLLASAGQDNVVRIWVLKNAFDYFN). The disordered stretch occupies residues 559 to 594 (EGRVSPSPSQESLNSSKSDTDGGVFSGTDDVDPDDK). Over residues 563–575 (SPSPSQESLNSSK) the composition is skewed to low complexity. WD repeat units follow at residues 608-646 (GHTA…CLCC), 648-688 (QHID…VALW), 693-732 (GQTK…YHTQ), 743-782 (RVGR…LSMK), 787-826 (VNSS…SKFT), 841-880 (AHNA…ENIP), and 882-912 (GALK…KNIS). A disordered region spans residues 861 to 882 (AETSSEKQEGDQAEPVENIPSG).

It localises to the cytoplasm. The protein resides in the cytosol. It is found in the perinuclear region. Its subcellular location is the endosome membrane. The protein localises to the golgi apparatus. It localises to the trans-Golgi network. In terms of biological role, downstream effector for rab11. May be involved in vesicle recycling. May also be involved in the inhibition of the intracellular ciliogenesis pathway. In Xenopus laevis (African clawed frog), this protein is WD repeat-containing protein 44 (wdr44).